Reading from the N-terminus, the 457-residue chain is Cyclic dof factor 2 (457 aa).

A disordered region spans residues 1 to 130; that stretch reads MADPAIKLFG…GGTACSQEGK (130 aa). A compositionally biased stretch (polar residues) spans 22 to 35; sequence DSSSSYTGFLTETQ. Composition is skewed to acidic residues over residues 45–54 and 62–73; these read TGDDDDEEMG and EGDDVGDGGGES. Composition is skewed to basic and acidic residues over residues 74-94 and 106-118; these read ETDK…RNES and EKTE…KTNE. A Dof-type zinc finger spans residues 138–192; sequence LPCPRCNSMETKFCYYNNYNVNQPRHFCKKCQRYWTAGGTMRNVPVGAGRRKNKS. Zn(2+) is bound by residues C140, C143, C165, and C168. Disordered stretches follow at residues 334–377 and 417–457; these read QPNS…KSKP and AFRS…HESS. Low complexity predominate over residues 337-346; that stretch reads SPSGSNPNSP.

As to quaternary structure, interacts with ADO2 (via kelch repeats) and ADO3 (via kelch repeats). Expressed in the vasculature of cotyledons and hypocotyls, leaves and roots.

It is found in the nucleus. Its function is as follows. Transcription factor that binds specifically to a 5'-AA[AG]G-3' consensus core sequence. Regulates a photoperiodic flowering response. Transcriptional repressor of 'CONSTANS' expression. The stability of CDF2 is controlled by 'GIGANTEA' and redundantly by ADO3, ADO2 and/or ADO1. This Arabidopsis thaliana (Mouse-ear cress) protein is Cyclic dof factor 2 (CDF2).